The sequence spans 382 residues: 1-deoxy-D-xylulose 5-phosphate reductoisomerase (382 aa).

Residues threonine 10, glycine 11, serine 12, isoleucine 13, asparagine 38, and asparagine 120 each contribute to the NADPH site. Lysine 121 is a binding site for 1-deoxy-D-xylulose 5-phosphate. Glutamate 122 serves as a coordination point for NADPH. Aspartate 146 contacts Mn(2+). 1-deoxy-D-xylulose 5-phosphate is bound by residues serine 147, glutamate 148, serine 172, and histidine 195. Glutamate 148 provides a ligand contact to Mn(2+). Residue glycine 201 coordinates NADPH. 1-deoxy-D-xylulose 5-phosphate contacts are provided by serine 208, asparagine 213, lysine 214, and glutamate 217. Residue glutamate 217 coordinates Mn(2+).

It belongs to the DXR family. The cofactor is Mg(2+). Mn(2+) is required as a cofactor.

It catalyses the reaction 2-C-methyl-D-erythritol 4-phosphate + NADP(+) = 1-deoxy-D-xylulose 5-phosphate + NADPH + H(+). It functions in the pathway isoprenoid biosynthesis; isopentenyl diphosphate biosynthesis via DXP pathway; isopentenyl diphosphate from 1-deoxy-D-xylulose 5-phosphate: step 1/6. In terms of biological role, catalyzes the NADPH-dependent rearrangement and reduction of 1-deoxy-D-xylulose-5-phosphate (DXP) to 2-C-methyl-D-erythritol 4-phosphate (MEP). The protein is 1-deoxy-D-xylulose 5-phosphate reductoisomerase of Thermoanaerobacter pseudethanolicus (strain ATCC 33223 / 39E) (Clostridium thermohydrosulfuricum).